Reading from the N-terminus, the 165-residue chain is Large ribosomal subunit protein uL10 (165 aa).

The protein belongs to the universal ribosomal protein uL10 family. In terms of assembly, part of the ribosomal stalk of the 50S ribosomal subunit. The N-terminus interacts with L11 and the large rRNA to form the base of the stalk. The C-terminus forms an elongated spine to which L12 dimers bind in a sequential fashion forming a multimeric L10(L12)X complex.

Functionally, forms part of the ribosomal stalk, playing a central role in the interaction of the ribosome with GTP-bound translation factors. This is Large ribosomal subunit protein uL10 from Sodalis glossinidius (strain morsitans).